Here is a 1049-residue protein sequence, read N- to C-terminus: Protein argonaute 12 (1049 aa).

Residues 1 to 53 (MSSRGGGGGGRRGGRGGGGGREGGGGGGGGGGRGGQGRGDLGVVGERQGGGRG) are compositionally biased toward gly residues. Disordered regions lie at residues 1–101 (MSSR…GVQV) and 144–192 (GGAP…KAVT). Residues 54-65 (AGERGGRHDAPR) are compositionally biased toward basic and acidic residues. Gly residues predominate over residues 66–76 (GRGGVAVGAGA). Over residues 144–160 (GGAPPAGQGSSLAAAQG) the composition is skewed to low complexity. Positions 404-515 (PVMDFAVQYL…LPMEVCSILE (112 aa)) constitute a PAZ domain. The Piwi domain occupies 694 to 1012 (LLIVILTEIS…GAFRARYYME (319 aa)).

Belongs to the argonaute family. Ago subfamily.

Its function is as follows. Probably involved in the RNA silencing pathway. May bind to short RNAs such as microRNAs (miRNAs) or short interfering RNAs (siRNAs), and represses the translation of mRNAs which are complementary to them. The sequence is that of Protein argonaute 12 (AGO12) from Oryza sativa subsp. japonica (Rice).